The following is a 132-amino-acid chain: MVTIGSSSLVLFLFFVVFVQITYTALHRFSRLLCTFFSKIIEEGCVWYNKKHRFPNLYKYIYVYVYILHICFEKYVNVEIIVGIPLLIKAIILGIQNILEVLLKDLGIHKRESAILHNSINIIIIILYVYIH.

The first 24 residues, 1–24 (MVTIGSSSLVLFLFFVVFVQITYT), serve as a signal peptide directing secretion. 2 consecutive transmembrane segments (helical) span residues 75-95 (YVNVEIIVGIPLLIKAIILGI) and 112-132 (ESAILHNSINIIIIILYVYIH).

It is found in the membrane. This is an uncharacterized protein from Saccharomyces cerevisiae (strain ATCC 204508 / S288c) (Baker's yeast).